A 233-amino-acid chain; its full sequence is Glyceraldehyde-3-phosphate dehydrogenase A, chloroplastic (233 aa).

Residues 49 to 51 (SCT), Thr-80, Arg-95, 108 to 109 (TG), and Arg-131 contribute to the D-glyceraldehyde 3-phosphate site. Residue Cys-50 is the Nucleophile of the active site. Asn-213 lines the NADP(+) pocket.

This sequence belongs to the glyceraldehyde-3-phosphate dehydrogenase family. As to quaternary structure, tetramer of either four A chains (GAPDH 2) or two A and two B chains (GAPDH 1).

It is found in the plastid. It localises to the chloroplast. The catalysed reaction is D-glyceraldehyde 3-phosphate + phosphate + NADP(+) = (2R)-3-phospho-glyceroyl phosphate + NADPH + H(+). It participates in carbohydrate biosynthesis; Calvin cycle. The sequence is that of Glyceraldehyde-3-phosphate dehydrogenase A, chloroplastic (GAPA) from Sinapis alba (White mustard).